The sequence spans 156 residues: Small ribosomal subunit protein uS7 (156 aa).

It belongs to the universal ribosomal protein uS7 family. Part of the 30S ribosomal subunit. Contacts proteins S9 and S11.

One of the primary rRNA binding proteins, it binds directly to 16S rRNA where it nucleates assembly of the head domain of the 30S subunit. Is located at the subunit interface close to the decoding center, probably blocks exit of the E-site tRNA. This Desulfatibacillum aliphaticivorans protein is Small ribosomal subunit protein uS7.